Consider the following 333-residue polypeptide: DNA-directed RNA polymerase subunit alpha (333 aa).

Residues Met-1–Thr-251 form an alpha N-terminal domain (alpha-NTD) region. Residues Asp-272–Asn-333 are alpha C-terminal domain (alpha-CTD).

Belongs to the RNA polymerase alpha chain family. In terms of assembly, homodimer. The RNAP catalytic core consists of 2 alpha, 1 beta, 1 beta' and 1 omega subunit. When a sigma factor is associated with the core the holoenzyme is formed, which can initiate transcription.

The enzyme catalyses RNA(n) + a ribonucleoside 5'-triphosphate = RNA(n+1) + diphosphate. Its function is as follows. DNA-dependent RNA polymerase catalyzes the transcription of DNA into RNA using the four ribonucleoside triphosphates as substrates. This chain is DNA-directed RNA polymerase subunit alpha, found in Mycoplasmopsis synoviae (strain 53) (Mycoplasma synoviae).